We begin with the raw amino-acid sequence, 461 residues long: General transcription factor IIH subunit 2 (461 aa).

Residues 1–13 (MSKNIYNNNAQNK) show a composition bias toward polar residues. Disordered regions lie at residues 1 to 37 (MSKN…DEDG) and 61 to 83 (LRPS…DRDG). The segment covering 61-71 (LRPSNQEERNT) has biased composition (basic and acidic residues). The 178-residue stretch at 98–275 (HLCLILDLSK…ESLMLKCQPP (178 aa)) folds into the VWFA domain. Residues 315–332 (CPRCGVKSCELPTDCQIC) form a C4-type zinc finger. The segment covering 423-447 (TNGKTNGNEITNGNGNGNGNENENG) has biased composition (low complexity). The segment at 423–461 (TNGKTNGNEITNGNGNGNGNENENGNGNGNGNGNGNGLH) is disordered. The tract at residues 434–459 (NGNGNGNGNENENGNGNGNGNGNGNG) is 13 X 2 tandem repeat of N-[GE]. Gly residues predominate over residues 448-461 (NGNGNGNGNGNGLH).

The protein belongs to the GTF2H2 family. In terms of assembly, component of the 7-subunit TFIIH core complex composed of XPB/repB, XPD/repD, gtf2h1, gtf2h2, gtf2h3, gtf2h4 and gtf2h5, which is active in NER. The core complex associates with the 3-subunit CDK-activating kinase (CAK) module composed of cycH/cyclin H, cdk7 and mnat1 to form the 10-subunit holoenzyme (holo-TFIIH) active in transcription.

It localises to the nucleus. Component of the general transcription and DNA repair factor IIH (TFIIH) core complex, which is involved in general and transcription-coupled nucleotide excision repair (NER) of damaged DNA and, when complexed to CAK, in RNA transcription by RNA polymerase II. In NER, TFIIH acts by opening DNA around the lesion to allow the excision of the damaged oligonucleotide and its replacement by a new DNA fragment. In transcription, TFIIH has an essential role in transcription initiation. When the pre-initiation complex (PIC) has been established, TFIIH is required for promoter opening and promoter escape. Phosphorylation of the C-terminal tail (CTD) of the largest subunit of RNA polymerase II by the kinase module CAK controls the initiation of transcription. The protein is General transcription factor IIH subunit 2 (gtf2h2) of Dictyostelium discoideum (Social amoeba).